We begin with the raw amino-acid sequence, 423 residues long: Putative protein phosphatase 2C 50 (423 aa).

The region spanning 52–380 is the PPM-type phosphatase domain; that stretch reads IFAFPFPTGT…DNMAAVVVPL (329 aa). Asp-74, Gly-75, Asp-320, and Asp-371 together coordinate Mn(2+).

Belongs to the PP2C family. It depends on Mg(2+) as a cofactor. Requires Mn(2+) as cofactor.

The enzyme catalyses O-phospho-L-seryl-[protein] + H2O = L-seryl-[protein] + phosphate. It carries out the reaction O-phospho-L-threonyl-[protein] + H2O = L-threonyl-[protein] + phosphate. The polypeptide is Putative protein phosphatase 2C 50 (Arabidopsis thaliana (Mouse-ear cress)).